Reading from the N-terminus, the 320-residue chain is Cyclin-D6-1 (320 aa).

Positions 279 to 320 (HHRSASSESERTTTVGSAANSADAKRRCMGPPRQWGVGGPDE) are disordered.

This sequence belongs to the cyclin family. Cyclin D subfamily.

This chain is Cyclin-D6-1 (CYCD6-1), found in Oryza sativa subsp. japonica (Rice).